A 387-amino-acid chain; its full sequence is Galactokinase (387 aa).

Glutamate 33 to aspartate 36 lines the substrate pocket. ATP is bound by residues serine 67 and glycine 124 to serine 130. Mg(2+) contacts are provided by serine 130 and glutamate 162. The active-site Proton acceptor is aspartate 174. A substrate-binding site is contributed by tyrosine 224.

The protein belongs to the GHMP kinase family. GalK subfamily.

The protein resides in the cytoplasm. The enzyme catalyses alpha-D-galactose + ATP = alpha-D-galactose 1-phosphate + ADP + H(+). Its pathway is carbohydrate metabolism; galactose metabolism. In terms of biological role, catalyzes the transfer of the gamma-phosphate of ATP to D-galactose to form alpha-D-galactose-1-phosphate (Gal-1-P). In Clostridium perfringens (strain ATCC 13124 / DSM 756 / JCM 1290 / NCIMB 6125 / NCTC 8237 / Type A), this protein is Galactokinase.